We begin with the raw amino-acid sequence, 1029 residues long: Ig-like and fibronectin type-III domain-containing protein 1 (1029 aa).

The N-terminal stretch at 1–22 (MCNVAEDPSSFSTITIATTCRA) is a signal peptide. Residues 23–918 (EWPKVSPCIA…RRSASKGSSS (896 aa)) lie on the Extracellular side of the membrane. N-linked (GlcNAc...) asparagine glycosylation is found at Asn-36, Asn-93, Asn-120, and Asn-165. The Fibronectin type-III 1 domain occupies 90–181 (APGNVTISEL…TAKLFSTLPT (92 aa)). Residues 185–227 (PLCTIGEPIYMNDGRVMICDAVNPCPNGFRCTGAGSDLSYCCP) form the WR1 domain. N-linked (GlcNAc...) asparagine glycans are attached at residues Asn-257, Asn-374, Asn-409, Asn-442, Asn-482, Asn-507, and Asn-552. 2 consecutive Fibronectin type-III domains span residues 330 to 417 (AVRN…TKPA) and 427 to 523 (APEK…AQKD). One can recognise an Ig-like C2-type domain in the interval 619–710 (ASVTMKKDKI…SRVEASSEVI (92 aa)). A disulfide bridge connects residues Cys-640 and Cys-693. Asn-753 carries an N-linked (GlcNAc...) asparagine glycan. Residues 817–909 (APSEVSNVRI…SAIPKDSEPR (93 aa)) form the Fibronectin type-III 4 domain. A helical transmembrane segment spans residues 919–939 (AFWIVVILVVFGVLIAGLAVL). The Cytoplasmic segment spans residues 940–1029 (SKRRELPYPI…NGMRYAKLET (90 aa)). The interval 988 to 1021 (SATTGTAAATQSEWQSANLEANSTTDNSHEYRNG) is disordered. Positions 998–1013 (QSEWQSANLEANSTTD) are enriched in polar residues.

It is found in the cell membrane. The polypeptide is Ig-like and fibronectin type-III domain-containing protein 1 (Caenorhabditis elegans).